The chain runs to 45 residues: Mu-conotoxin-like Cal 12.1.2a (45 aa).

4 disulfide bridges follow: Cys-3–Cys-16, Cys-11–Cys-28, Cys-18–Cys-33, and Cys-27–Cys-39. Pro-23 is subject to 4-hydroxyproline. 2 positions are modified to 6'-bromotryptophan: Trp-37 and Trp-38. Pro-40 carries the post-translational modification 4-hydroxyproline. Trp-44 carries the post-translational modification 6'-bromotryptophan.

Expressed by the venom duct.

The protein localises to the secreted. Its function is as follows. Mu-conotoxins block voltage-gated sodium channels. This toxin reversibly blocks voltage-gated sodium channel in cephalopods, with no alteration in the voltage dependence of sodium conductance or on the kinetics of inactivation. The protein is Mu-conotoxin-like Cal 12.1.2a of Californiconus californicus (California cone).